A 317-amino-acid polypeptide reads, in one-letter code: Melanocyte-stimulating hormone receptor (317 aa).

Over 1–37 (MAVQGFQRRLLGSLNSTPTAIPQLGLAANQTGARCLE) the chain is Extracellular. Asn-29 carries an N-linked (GlcNAc...) asparagine glycan. The chain crosses the membrane as a helical span at residues 38 to 63 (VSIPDGLFLSLGLVSLVENVLVVATI). At 64 to 72 (AKNRNLHSP) the chain is on the cytoplasmic side. The chain crosses the membrane as a helical span at residues 73–93 (TYCFICCLALSDLLVSGGNVL). Over 94 to 118 (ETVVILLLEASALAARAAVVQPLDN) the chain is Extracellular. The helical transmembrane segment at 119–140 (VIDVITCSSMVSSLCFLGAIAV) threads the bilayer. The Cytoplasmic segment spans residues 141 to 163 (DRYVSIFYALRYHSIVTLPRARQ). A helical transmembrane segment spans residues 164–183 (AIAAIWVASVLFSTLFIAYY). Residues 184–191 (DHAAVLLC) are Extracellular-facing. Residues 192 to 211 (LVVFFLAMLVXMAVLYVHML) form a helical membrane-spanning segment. The Cytoplasmic segment spans residues 212 to 240 (ARACQHAQGIARLHKRQRPLHQGFGLKGA). A helical membrane pass occupies residues 241–266 (VTLTILLGIFFLCWGPFFLHLTLIVL). The Extracellular portion of the chain corresponds to 267–279 (CPQHPTCSCIFKN). Residues 280 to 300 (FNLFLTLIICNAIIDPLIYAF) traverse the membrane as a helical segment. Residues 301 to 317 (RRQELRRTLKEGLTCSW) are Cytoplasmic-facing. Cys-315 carries S-palmitoyl cysteine lipidation.

This sequence belongs to the G-protein coupled receptor 1 family. Interacts with MGRN1, but does not undergo MGRN1-mediated ubiquitination; this interaction competes with GNAS-binding and thus inhibits agonist-induced cAMP production. Interacts with OPN3; the interaction results in a decrease in MC1R-mediated cAMP signaling and ultimately a decrease in melanin production in melanocytes.

The protein localises to the cell membrane. Its function is as follows. Receptor for MSH (alpha, beta and gamma) and ACTH. The activity of this receptor is mediated by G proteins which activate adenylate cyclase. Mediates melanogenesis, the production of eumelanin (black/brown) and phaeomelanin (red/yellow), via regulation of cAMP signaling in melanocytes. This chain is Melanocyte-stimulating hormone receptor (MC1R), found in Hylobates muelleri (Mueller's Bornean gibbon).